The sequence spans 682 residues: uncharacterized protein (682 aa).

The MCM domain occupies 284–487 (VVNILADRLI…KDKDIAEYIV (204 aa)). 329 to 336 (TDPGIGKT) contacts ATP.

Belongs to the MCM family.

This is an uncharacterized protein from Methanocaldococcus jannaschii (strain ATCC 43067 / DSM 2661 / JAL-1 / JCM 10045 / NBRC 100440) (Methanococcus jannaschii).